The chain runs to 610 residues: Sulfite reductase [NADPH] flavoprotein alpha-component (610 aa).

The 139-residue stretch at isoleucine 68 to valine 206 folds into the Flavodoxin-like domain. Residues serine 74–alanine 79, serine 121–glycine 124, and leucine 157–alanine 166 each bind FMN. In terms of domain architecture, FAD-binding FR-type spans glutamate 243–proline 459. Residues threonine 331, serine 365, arginine 397 to serine 400, threonine 415 to serine 417, tyrosine 421, and glycine 430 to serine 433 contribute to the FAD site. Residues serine 530–arginine 531, lysine 536–glutamine 540, and aspartate 572 each bind NADP(+). Position 610 (tyrosine 610) interacts with FAD.

It belongs to the NADPH-dependent sulphite reductase flavoprotein subunit CysJ family. The protein in the N-terminal section; belongs to the flavodoxin family. In the C-terminal section; belongs to the flavoprotein pyridine nucleotide cytochrome reductase family. In terms of assembly, alpha(8)-beta(8). The alpha component is a flavoprotein, the beta component is a hemoprotein. FAD is required as a cofactor. It depends on FMN as a cofactor.

The catalysed reaction is hydrogen sulfide + 3 NADP(+) + 3 H2O = sulfite + 3 NADPH + 4 H(+). The protein operates within sulfur metabolism; hydrogen sulfide biosynthesis; hydrogen sulfide from sulfite (NADPH route): step 1/1. Its function is as follows. Component of the sulfite reductase complex that catalyzes the 6-electron reduction of sulfite to sulfide. This is one of several activities required for the biosynthesis of L-cysteine from sulfate. The flavoprotein component catalyzes the electron flow from NADPH -&gt; FAD -&gt; FMN to the hemoprotein component. In Blochmanniella floridana, this protein is Sulfite reductase [NADPH] flavoprotein alpha-component.